Reading from the N-terminus, the 243-residue chain is MAFTFKQFHIDDHGCGMPVSTDGVLLGAWAPLSKAENLLDIGAGSGLLSLMAAQRSEAQITAVELDDTAFHACNKNFIASKWQSRLNLVYASVQEFCNQHTDGNNAQFDHIICNPPYFKGGTQSSNRLRAQARHTDSLTFHALLEVITKLLAATGTASLILPSQSMTPFIEEVEKSELWMNQLTNISDSRFKAPHRHLFTLKHKATKLAEDDTVITNNLCIKEPDASYTPEMIALITGFYLKY.

The protein belongs to the methyltransferase superfamily. tRNA (adenine-N(6)-)-methyltransferase family.

The protein localises to the cytoplasm. The catalysed reaction is adenosine(37) in tRNA1(Val) + S-adenosyl-L-methionine = N(6)-methyladenosine(37) in tRNA1(Val) + S-adenosyl-L-homocysteine + H(+). Its function is as follows. Specifically methylates the adenine in position 37 of tRNA(1)(Val) (anticodon cmo5UAC). In Shewanella woodyi (strain ATCC 51908 / MS32), this protein is tRNA1(Val) (adenine(37)-N6)-methyltransferase.